Reading from the N-terminus, the 489-residue chain is Dipeptide and tripeptide permease B (489 aa).

The Cytoplasmic segment spans residues 1-27; sequence MNKPASIGLLQQPKPFFMIFFVELWER. A helical membrane pass occupies residues 28 to 48; the sequence is FGYYGVQGILAVYFVHKLGFS. Residues 49–52 lie on the Periplasmic side of the membrane; sequence QEQA. A helical membrane pass occupies residues 53 to 73; the sequence is FTTFGAFAALVYGLIAIGGYV. At 74–82 the chain is on the cytoplasmic side; that stretch reads GDHLLGTKR. The helical transmembrane segment at 83 to 103 threads the bilayer; it reads TIVLGAIVLTVGYFMTGLSIL. Over 104 to 106 the chain is Periplasmic; that stretch reads KPE. The helical transmembrane segment at 107-127 threads the bilayer; sequence LIFYALGTIAVGNGLFKANPA. The Cytoplasmic portion of the chain corresponds to 128–146; it reads SLLSKCYPPKDPRLDGAFT. A helical transmembrane segment spans residues 147–167; sequence LFYMSINIGSLFSLAIAPVIA. Residues 168-171 lie on the Periplasmic side of the membrane; the sequence is EKFG. A helical membrane pass occupies residues 172-192; sequence YAVTYNICGIGLIIALLVYVL. At 193 to 212 the chain is on the cytoplasmic side; that stretch reads YRNTVRNIGSEPDHRPINYK. A run of 2 helical transmembrane segments spans residues 213-233 and 234-254; these read NLLLVLAGTVTMVFVCAWLMH and NVKIANIVLIGLSVVIVFIFF. The Cytoplasmic segment spans residues 255-267; sequence REAFKQDKVGRNK. A helical membrane pass occupies residues 268–288; that stretch reads MFVAFILMLQAIVFFILYAQM. The Periplasmic segment spans residues 289 to 311; that stretch reads PTSLNFFAINNVHHQLLGFNINP. A helical transmembrane segment spans residues 312–332; sequence VSFQALNPFWIVVASPILAAL. Topologically, residues 333–350 are cytoplasmic; the sequence is YTHWGSRSKDLTMPAKFT. A helical membrane pass occupies residues 351 to 371; that stretch reads VGMFLCSLGFLTAAAAGLWFA. At 372–375 the chain is on the periplasmic side; that stretch reads DEQG. Residues 376–396 form a helical membrane-spanning segment; the sequence is LTSPWFIVLVYLFQSLGELMI. Over 397-419 the chain is Cytoplasmic; the sequence is SALGLAMVAALVPQYLMGFILGM. Residues 420 to 440 traverse the membrane as a helical segment; that stretch reads WYLTQATSFLLGGYVAAFTAI. Residues 441–456 are Periplasmic-facing; it reads PEGITDPLETLPVYTN. Residues 457-477 form a helical membrane-spanning segment; that stretch reads VFGKIGITTFIVAIIMAITVP. Topologically, residues 478–489 are cytoplasmic; the sequence is LLNRMMNGKQKA.

This sequence belongs to the major facilitator superfamily. Proton-dependent oligopeptide transporter (POT/PTR) (TC 2.A.17) family. DtpB subfamily.

The protein localises to the cell inner membrane. Proton-dependent permease that transports di- and tripeptides. This Photorhabdus asymbiotica subsp. asymbiotica (strain ATCC 43949 / 3105-77) (Xenorhabdus luminescens (strain 2)) protein is Dipeptide and tripeptide permease B.